The chain runs to 315 residues: Trimethylguanosine synthase (315 aa).

The interval 1–58 (MGRTFIHASKIKHAARKRKHHSNFRTLIKLLNNDAYKIESSKPLKNGKLFKYWKNRRR) is required for correct nucleolar localization. D126 contributes to the S-adenosyl-L-methionine binding site. The interval 271-315 (TENSRRESSEKEELSSENEELSKRKKHESTTTTKDNTVDIYDVNG) is disordered. Residues 273-284 (NSRRESSEKEEL) show a composition bias toward basic and acidic residues.

It belongs to the methyltransferase superfamily. Trimethylguanosine synthase family. As to quaternary structure, monomer. Interacts with the spliceosomal snRNP core component SMB1 and the snoRNP components CBF5 and NOP58.

The protein resides in the nucleus. It is found in the nucleolus. It carries out the reaction a 5'-end (N(7)-methyl 5'-triphosphoguanosine)-ribonucleoside in snRNA + S-adenosyl-L-methionine = a 5'-end (N(2),N(7)-dimethyl 5'-triphosphoguanosine)-ribonucleoside in snRNA + S-adenosyl-L-homocysteine + H(+). The enzyme catalyses a 5'-end (N(7)-methyl 5'-triphosphoguanosine)-ribonucleoside in snoRNA + S-adenosyl-L-methionine = a 5'-end (N(2),N(7)-dimethyl 5'-triphosphoguanosine)-ribonucleoside in snoRNA + S-adenosyl-L-homocysteine + H(+). The catalysed reaction is a 5'-end (N(2),N(7)-dimethyl 5'-triphosphoguanosine)-ribonucleoside in snRNA + S-adenosyl-L-methionine = a 5'-end (N(2),N(2),N(7)-trimethyl 5'-triphosphoguanosine)-ribonucleoside in snRNA + S-adenosyl-L-homocysteine + H(+). It catalyses the reaction a 5'-end (N(2),N(7)-dimethyl 5'-triphosphoguanosine)-ribonucleoside in snoRNA + S-adenosyl-L-methionine = a 5'-end (N(2),N(2),N(7)-trimethyl 5'-triphosphoguanosine)-ribonucleoside in snoRNA + S-adenosyl-L-homocysteine + H(+). Substrate inhibited by S-adenosyl-L-homocysteine. Catalyzes the two serial methylation steps for the conversion of the 7-monomethylguanosine (m(7)G) caps of snRNAs and snoRNAs to a 2,2,7-trimethylguanosine (m(2,2,7)G) cap structure. The enzyme is specific for guanine, and N7 methylation must precede N2 methylation. Hypermethylates the m3G cap on TLC1 telomerase which affects telomere silencing and telomere length regulation. Required for pre-mRNA splicing, pre-rRNA processing and small ribosomal subunit synthesis. Involved in nucleolar structural organization. This Saccharomyces cerevisiae (strain ATCC 204508 / S288c) (Baker's yeast) protein is Trimethylguanosine synthase (TGS1).